The primary structure comprises 480 residues: Cytochrome b-c1 complex subunit 1, mitochondrial (480 aa).

A mitochondrion-targeting transit peptide spans 1 to 34 (MAASAVCRAAGAGTRVLLRTRRSPALLRSSDLRG). N6-acetyllysine is present on residues Lys111 and Lys138. An N6-acetyllysine; alternate modification is found at Lys163. The residue at position 163 (Lys163) is an N6-succinyllysine; alternate. Ser212 carries the post-translational modification Phosphoserine. Residue Lys248 is modified to N6-acetyllysine.

Belongs to the peptidase M16 family. UQCRC1/QCR1 subfamily. As to quaternary structure, component of the ubiquinol-cytochrome c oxidoreductase (cytochrome b-c1 complex, complex III, CIII), a multisubunit enzyme composed of 11 subunits. The complex is composed of 3 respiratory subunits cytochrome b, cytochrome c1 and Rieske protein UQCRFS1, 2 core protein subunits UQCRC1/QCR1 and UQCRC2/QCR2, and 6 low-molecular weight protein subunits UQCRH/QCR6, UQCRB/QCR7, UQCRQ/QCR8, UQCR10/QCR9, UQCR11/QCR10 and subunit 9, the cleavage product of Rieske protein UQCRFS1. The complex exists as an obligatory dimer and forms supercomplexes (SCs) in the inner mitochondrial membrane with NADH-ubiquinone oxidoreductase (complex I, CI) and cytochrome c oxidase (complex IV, CIV), resulting in different assemblies (supercomplex SCI(1)III(2)IV(1) and megacomplex MCI(2)III(2)IV(2)). Interacts with UQCC6. Interacts with STMP1.

It is found in the mitochondrion inner membrane. In terms of biological role, component of the ubiquinol-cytochrome c oxidoreductase, a multisubunit transmembrane complex that is part of the mitochondrial electron transport chain which drives oxidative phosphorylation. The respiratory chain contains 3 multisubunit complexes succinate dehydrogenase (complex II, CII), ubiquinol-cytochrome c oxidoreductase (cytochrome b-c1 complex, complex III, CIII) and cytochrome c oxidase (complex IV, CIV), that cooperate to transfer electrons derived from NADH and succinate to molecular oxygen, creating an electrochemical gradient over the inner membrane that drives transmembrane transport and the ATP synthase. The cytochrome b-c1 complex catalyzes electron transfer from ubiquinol to cytochrome c, linking this redox reaction to translocation of protons across the mitochondrial inner membrane, with protons being carried across the membrane as hydrogens on the quinol. In the process called Q cycle, 2 protons are consumed from the matrix, 4 protons are released into the intermembrane space and 2 electrons are passed to cytochrome c. The 2 core subunits UQCRC1/QCR1 and UQCRC2/QCR2 are homologous to the 2 mitochondrial-processing peptidase (MPP) subunits beta-MPP and alpha-MPP respectively, and they seem to have preserved their MPP processing properties. May be involved in the in situ processing of UQCRFS1 into the mature Rieske protein and its mitochondrial targeting sequence (MTS)/subunit 9 when incorporated into complex III. Seems to play an important role in the maintenance of proper mitochondrial function in nigral dopaminergic neurons. In Bos taurus (Bovine), this protein is Cytochrome b-c1 complex subunit 1, mitochondrial (UQCRC1).